The following is a 162-amino-acid chain: NADH-quinone oxidoreductase subunit I (162 aa).

2 4Fe-4S ferredoxin-type domains span residues 52–82 (LRRYPNGEERCIACKLCEAICPAKAITIEAG) and 93–122 (TRYDIDMVKCIYCGFCQEACPVDAIVEGPN). Residues cysteine 62, cysteine 65, cysteine 68, cysteine 72, cysteine 102, cysteine 105, cysteine 108, and cysteine 112 each coordinate [4Fe-4S] cluster.

Belongs to the complex I 23 kDa subunit family. NDH-1 is composed of 14 different subunits. Subunits NuoA, H, J, K, L, M, N constitute the membrane sector of the complex. It depends on [4Fe-4S] cluster as a cofactor.

It is found in the cell inner membrane. The enzyme catalyses a quinone + NADH + 5 H(+)(in) = a quinol + NAD(+) + 4 H(+)(out). Its function is as follows. NDH-1 shuttles electrons from NADH, via FMN and iron-sulfur (Fe-S) centers, to quinones in the respiratory chain. The immediate electron acceptor for the enzyme in this species is believed to be ubiquinone. Couples the redox reaction to proton translocation (for every two electrons transferred, four hydrogen ions are translocated across the cytoplasmic membrane), and thus conserves the redox energy in a proton gradient. The sequence is that of NADH-quinone oxidoreductase subunit I from Beijerinckia indica subsp. indica (strain ATCC 9039 / DSM 1715 / NCIMB 8712).